Consider the following 349-residue polypeptide: MSRVRYNNSVALPATQTVIKQNEDGLLTIQKDFPLPEIRSDRLLVRVEYVAINPCDWKMSERFPAPGAVDGCDFAGTVVALGSDVSKTGRFQVGEKVCGGVHGSNPIDPTTGSFAEYLSADAEFTFKVPGYMGLKEAAAVGGTGIGTMGLALSKSLGLPGSPTRPVGETDSKYVLVPIAVCSPKNYDLVKSYGAVKAFDYHSPTCAQDIRAYTKNRLAHIIDPIVEAKTMQLCYAAMGRAGGKYCALEAYADELCTRKVVKPELVMGMAILGRKVALNHGYGSEADAGKRAFGIEWYREMQDLLDAGRLMTHPVRVVPGRFDGIMKGLQMLKTKQVSGEKLIVQLGSNN.

55–58 (CDWK) contributes to the NADP(+) binding site. 143–150 (TGIGTMGL) contributes to the substrate binding site. NADP(+)-binding positions include 182–185 (SPKN), tyrosine 200, and 247–248 (LE). A substrate-binding site is contributed by 267-271 (GMAIL). 336–337 (VS) contacts NADP(+).

The protein belongs to the zinc-containing alcohol dehydrogenase family. Monomer.

Its pathway is mycotoxin biosynthesis. Its function is as follows. Trans-enoyl reductase; part of the gene cluster that mediates the biosynthesis of the mycotoxins phomacins, leucine-derived cytochalasans with potent actin polymerization-inhibitory activities and monocot-specific antigerminative activities. The first step in the pathway is catalyzed by the hybrid PKS-NRPS phmA, assisted by the enoyl reductase phmE, that are responsible for fusion of the leucine precursor and the polyketide backbone to produce a 2-pyrrolidone intermediate. The polyketide synthase module (PKS) of phmA is responsible for the synthesis of the polyketide backbone and the downstream nonribosomal peptide synthetase (NRPS) amidates the carboxyl end of the polyketide with the leucine precursor. Because phmA lacks a designated enoylreductase (ER) domain, the required activity is provided the enoyl reductase phmE. Reduction by the hydrolyase phmG, followed by dehydration and intra-molecular Diels-Alder cyclization by the Diels-Alderase phmD then yield the required isoindolone-fused macrocycle. A number of oxidative steps catalyzed by the tailoring cytochrome P450 monooxygenase phmB, the FAD-linked oxidoreductase phmC and the short-chain dehydrogenase/reductase phmF, are further required to afford the final products, phomacin D and phomacin E. This is Trans-enoyl reductase phmE from Phaeosphaeria nodorum (strain SN15 / ATCC MYA-4574 / FGSC 10173) (Glume blotch fungus).